The sequence spans 226 residues: Phosphoglycolate phosphatase (226 aa).

The active-site Nucleophile is the D9. 2 residues coordinate Mg(2+): D9 and D11. Position 150 (K150) interacts with substrate. Residues D173 and D177 each contribute to the Mg(2+) site.

It belongs to the archaeal SPP-like hydrolase family. Requires Mg(2+) as cofactor.

The enzyme catalyses 2-phosphoglycolate + H2O = glycolate + phosphate. Functionally, catalyzes the dephosphorylation of 2-phosphoglycolate. The sequence is that of Phosphoglycolate phosphatase from Methanosarcina mazei (strain ATCC BAA-159 / DSM 3647 / Goe1 / Go1 / JCM 11833 / OCM 88) (Methanosarcina frisia).